The primary structure comprises 91 residues: Aspartyl/glutamyl-tRNA(Asn/Gln) amidotransferase subunit C (91 aa).

The segment at 68–91 is disordered; it reads LDQDDALANAPETEDGRFKGPNVS.

This sequence belongs to the GatC family. In terms of assembly, heterotrimer of A, B and C subunits.

It carries out the reaction L-glutamyl-tRNA(Gln) + L-glutamine + ATP + H2O = L-glutaminyl-tRNA(Gln) + L-glutamate + ADP + phosphate + H(+). The catalysed reaction is L-aspartyl-tRNA(Asn) + L-glutamine + ATP + H2O = L-asparaginyl-tRNA(Asn) + L-glutamate + ADP + phosphate + 2 H(+). Functionally, allows the formation of correctly charged Asn-tRNA(Asn) or Gln-tRNA(Gln) through the transamidation of misacylated Asp-tRNA(Asn) or Glu-tRNA(Gln) in organisms which lack either or both of asparaginyl-tRNA or glutaminyl-tRNA synthetases. The reaction takes place in the presence of glutamine and ATP through an activated phospho-Asp-tRNA(Asn) or phospho-Glu-tRNA(Gln). In Halobacterium salinarum (strain ATCC 29341 / DSM 671 / R1), this protein is Aspartyl/glutamyl-tRNA(Asn/Gln) amidotransferase subunit C.